The sequence spans 555 residues: DNA-directed primase/polymerase protein (555 aa).

A coiled-coil region spans residues 1–22 (MKRKWEATLKQIEERASHYERK). Substrate contacts are provided by residues Arg-76, 114–116 (DLE), and 165–169 (KFSRH). Mn(2+)-binding residues include Asp-114 and Glu-116. Positions 210–230 (ETTGHEFTHFSETPSEQGTCF) are disordered. Polar residues predominate over residues 219 to 230 (FSETPSEQGTCF). Phosphoserine is present on Ser-255. Residues 288–291 (RNFR) and Lys-297 each bind substrate. Positions 418, 425, 445, and 450 each coordinate Zn(2+). The short motif at 418 to 451 (CENIGRAHRSNNIMILVDLKNEVWYQKCHDPVCK) is the Zinc knuckle motif element. Positions 480–503 (TDTTADTETKSPHGPSSSVLSKGA) are disordered. The interval 480–555 (TDTTADTETK…DELLIEVLQE (76 aa)) is interaction with RPA1. Short sequence motifs (RPA1-binding motif) lie at residues 509–523 (WDNGIDDTYILEATE) and 543–551 (EIPDELLIE).

Belongs to the eukaryotic-type primase small subunit family. In terms of assembly, interacts with RPA1; leading to recruitment to chromatin and stimulate DNA primase activity. Interacts with SSBP1. Interacts with POLDIP2; leading to enhance DNA polymerase activity. Mn(2+) serves as cofactor.

The protein localises to the nucleus. It localises to the mitochondrion matrix. It is found in the chromosome. It carries out the reaction ssDNA + n NTP = ssDNA/pppN(pN)n-1 hybrid + (n-1) diphosphate.. It catalyses the reaction DNA(n) + a 2'-deoxyribonucleoside 5'-triphosphate = DNA(n+1) + diphosphate. Functionally, DNA primase and DNA polymerase required to tolerate replication-stalling lesions by bypassing them. Required to facilitate mitochondrial and nuclear replication fork progression by initiating de novo DNA synthesis using dNTPs and acting as an error-prone DNA polymerase able to bypass certain DNA lesions. Shows a high capacity to tolerate DNA damage lesions such as 8oxoG and abasic sites in DNA. Provides different translesion synthesis alternatives when DNA replication is stalled: able to synthesize DNA primers downstream of lesions, such as ultraviolet (UV) lesions, R-loops and G-quadruplexes, to allow DNA replication to continue. Can also realign primers ahead of 'unreadable lesions' such as abasic sites and 6-4 photoproduct (6-4 pyrimidine-pyrimidinone), thereby skipping the lesion. Repriming avoids fork degradation while leading to accumulation of internal ssDNA gaps behind the forks. Also able to incorporate nucleotides opposite DNA lesions such as 8oxoG, like a regular translesion synthesis DNA polymerase. Also required for reinitiating stalled forks after UV damage during nuclear DNA replication. Required for mitochondrial DNA (mtDNA) synthesis and replication, by reinitiating synthesis after UV damage or in the presence of chain-terminating nucleotides. Prevents APOBEC family-mediated DNA mutagenesis by repriming downstream of abasic site to prohibit error-prone translesion synthesis. Has non-overlapping function with POLH. In addition to its role in DNA damage response, also required to maintain efficient nuclear and mitochondrial DNA replication in unperturbed cells. In Bos taurus (Bovine), this protein is DNA-directed primase/polymerase protein.